The sequence spans 130 residues: MMTVDPIQDLRNICLQILQSVNSNTLLEEETWDYNTLINNIDLPKQTREALRRSASQYLLYCQRKNKTYTTRKPLPAKAKLQLVETFSKKRYLTRCEKHQLAVQCGITTNQVQIWFANRRKRSKDLNNRD.

The homeobox DNA-binding region spans 68–127 (TYTTRKPLPAKAKLQLVETFSKKRYLTRCEKHQLAVQCGITTNQVQIWFANRRKRSKDLN).

Belongs to the MATA1 family.

The protein localises to the nucleus. Its function is as follows. Mating type proteins are sequence specific DNA-binding proteins that act as master switches in yeast differentiation by controlling gene expression in a cell type-specific fashion. In Candida glabrata (strain ATCC 2001 / BCRC 20586 / JCM 3761 / NBRC 0622 / NRRL Y-65 / CBS 138) (Yeast), this protein is Mating-type-like protein A1 (MTL1A1).